Here is a 668-residue protein sequence, read N- to C-terminus: Auxilin-like clathrin uncoating factor SWA2 (668 aa).

The interval 1–95 (MSDPFAHLLT…ANNTPPSALA (95 aa)) is disordered. The segment at 1–100 (MSDPFAHLLT…PSALANTDDD (100 aa)) is CB1. Residues 17-36 (SASASKETTPQSSNSPSITG) show a composition bias toward polar residues. Phosphoserine is present on residues Ser-52 and Ser-64. Low complexity predominate over residues 76–92 (PTNSTTKSNTANNTPPS). The UBA domain maps to 140-180 (DEVKDMEIARLMSLGLSIEEATEFYENDVTYERYLEILKSK). Positions 238-302 (EANDRLNNYS…FETKIDITKR (65 aa)) are CB2. A phosphoserine mark is found at Ser-264, Ser-308, and Ser-312. 2 disordered regions span residues 302–323 (RTAP…EENS) and 339–359 (EGNL…ENSN). Positions 303-362 (TAPDVSHSSSPTSGILIEENSRRNEPLIEDSLLDFSEGNLTNSKSNEDSTLFNENSNTDS) are CB3. Over residues 340-359 (GNLTNSKSNEDSTLFNENSN) the composition is skewed to polar residues. 3 TPR repeats span residues 374–407 (YNEF…LPLN), 412–445 (IIAL…FPSS), and 467–500 (PKIM…NFFD). A disordered region spans residues 511-556 (QDFINPPPVKKSMPVKKKTTTTSPATKKQNLTASSSNSPISVDSTS). The segment covering 539-555 (QNLTASSSNSPISVDST) has biased composition (polar residues). Positions 603–668 (CNWKDVSMQD…DKFKLQNDIN (66 aa)) constitute a J domain.

As to quaternary structure, interacts with the clathrin light and heavy chains CLC1 and CHC1, respectively. Binds to clathrin with its N-terminal domain containing 3 clathrin-binding (CB) motifs. Association with clathrin is transient. Binds to polyubiquitin and ubiquitinated proteins.

Its subcellular location is the cytoplasm. The protein localises to the endoplasmic reticulum membrane. Cofactor for the uncoating of clathrin-coated vesicles (CCVs) by Hsp70-type chaperones (SSA1/2/3 and SSB1/2). Coat disassembly is important for fusion of vesicles with target membranes and for recycling components of clathrin coats to the cytoplasm for further rounds of vesicle formation. Binds to assembled clathrin and recruits the ATP-activated chaperone to CCVs. Stimulates the ATPase activity of the clathrin-associated Hsp70-type chaperone SSA1, which then disrupts clathrin-clathrin interactions, leading to release of the clathrin coat. In addition, prevents unproductive clathrin assembly in the cell. Also required for cortical endoplasmic reticulum inheritance. This chain is Auxilin-like clathrin uncoating factor SWA2 (SWA2), found in Saccharomyces cerevisiae (strain ATCC 204508 / S288c) (Baker's yeast).